Here is a 78-residue protein sequence, read N- to C-terminus: Small ribosomal subunit protein bS20 (78 aa).

Belongs to the bacterial ribosomal protein bS20 family.

Functionally, binds directly to 16S ribosomal RNA. This is Small ribosomal subunit protein bS20 from Streptococcus thermophilus (strain ATCC BAA-491 / LMD-9).